Reading from the N-terminus, the 447-residue chain is Pup--protein ligase 2 (447 aa).

E4 serves as a coordination point for Mg(2+). Position 48 (R48) interacts with ATP. Y50 contacts Mg(2+). The Proton acceptor role is filled by D52. Residue E58 participates in Mg(2+) binding. Positions 61 and 414 each coordinate ATP.

This sequence belongs to the Pup ligase/Pup deamidase family. Pup-conjugating enzyme subfamily.

The catalysed reaction is ATP + [prokaryotic ubiquitin-like protein]-L-glutamate + [protein]-L-lysine = ADP + phosphate + N(6)-([prokaryotic ubiquitin-like protein]-gamma-L-glutamyl)-[protein]-L-lysine.. The protein operates within protein degradation; proteasomal Pup-dependent pathway. Its pathway is protein modification; protein pupylation. Functionally, catalyzes the covalent attachment of the prokaryotic ubiquitin-like protein modifier Pup to the proteasomal substrate proteins, thereby targeting them for proteasomal degradation. This tagging system is termed pupylation. The ligation reaction involves the side-chain carboxylate of the C-terminal glutamate of Pup and the side-chain amino group of a substrate lysine. This is Pup--protein ligase 2 from Rhodococcus erythropolis (Arthrobacter picolinophilus).